Here is a 252-residue protein sequence, read N- to C-terminus: MVRSKHMKILAANAQADSSNTEARQSLLFSQSPIPNAESRLLVAGVDEAGRGPLAGPVAVAAVVFDPNKPRINGLDDSKQLTAERREQLYARIVDRALSWSVVLIDSEEIDRINIYQATMLGMRRAVEGVAHVAGFARIDGNRVPKGLPCPAEALIGGDALDRAIMAASIVAKVTRDRLMHELHAQHPEYRFDQHKGYSTPMHLAALQTHGPCPQHRRSFAPVRLALEGREQGSAAIGDPEQLQVAQLVAPL.

Residues 41-232 enclose the RNase H type-2 domain; the sequence is LLVAGVDEAG…VRLALEGREQ (192 aa). A divalent metal cation is bound by residues aspartate 47, glutamate 48, and aspartate 140.

The protein belongs to the RNase HII family. It depends on Mn(2+) as a cofactor. The cofactor is Mg(2+).

The protein resides in the cytoplasm. It carries out the reaction Endonucleolytic cleavage to 5'-phosphomonoester.. Functionally, endonuclease that specifically degrades the RNA of RNA-DNA hybrids. The chain is Ribonuclease HII from Xanthomonas oryzae pv. oryzae (strain KACC10331 / KXO85).